We begin with the raw amino-acid sequence, 422 residues long: UDP-N-acetylglucosamine 1-carboxyvinyltransferase (422 aa).

22–23 contributes to the phosphoenolpyruvate binding site; that stretch reads KN. UDP-N-acetyl-alpha-D-glucosamine is bound at residue R94. C118 acts as the Proton donor in catalysis. C118 is subject to 2-(S-cysteinyl)pyruvic acid O-phosphothioketal. Residues 123-127, D309, and L331 each bind UDP-N-acetyl-alpha-D-glucosamine; that span reads RPIDL.

Belongs to the EPSP synthase family. MurA subfamily.

The protein resides in the cytoplasm. It carries out the reaction phosphoenolpyruvate + UDP-N-acetyl-alpha-D-glucosamine = UDP-N-acetyl-3-O-(1-carboxyvinyl)-alpha-D-glucosamine + phosphate. It functions in the pathway cell wall biogenesis; peptidoglycan biosynthesis. Cell wall formation. Adds enolpyruvyl to UDP-N-acetylglucosamine. The protein is UDP-N-acetylglucosamine 1-carboxyvinyltransferase of Sulfurimonas denitrificans (strain ATCC 33889 / DSM 1251) (Thiomicrospira denitrificans (strain ATCC 33889 / DSM 1251)).